The chain runs to 769 residues: Integrin beta-2 (769 aa).

A signal peptide spans 1 to 22 (MLRQRPQLLLLAGLLALQSVLS). The residue at position 23 (Gln-23) is a Pyrrolidone carboxylic acid. The Extracellular segment spans residues 23 to 700 (QECTNYKVST…DMLECVKGPN (678 aa)). One can recognise a PSI domain in the interval 24–74 (ECTNYKVSTCRDCIESGPGCAWCQKLNFTGQGEPDSIRCDTRAELLSKGCP). Intrachain disulfides connect Cys-25–Cys-43, Cys-33–Cys-447, Cys-36–Cys-62, Cys-46–Cys-73, Cys-191–Cys-198, Cys-246–Cys-286, Cys-386–Cys-400, Cys-420–Cys-445, Cys-449–Cys-467, Cys-459–Cys-470, Cys-472–Cys-481, Cys-483–Cys-514, Cys-497–Cys-512, Cys-506–Cys-517, Cys-519–Cys-534, Cys-536–Cys-559, Cys-541–Cys-557, Cys-549–Cys-562, Cys-564–Cys-573, Cys-575–Cys-598, Cys-582–Cys-596, Cys-590–Cys-601, Cys-603–Cys-612, Cys-615–Cys-618, Cys-622–Cys-662, Cys-628–Cys-647, Cys-631–Cys-643, and Cys-670–Cys-695. N-linked (GlcNAc...) asparagine glycosylation is found at Asn-50 and Asn-116. The VWFA domain occupies 124 to 363 (GYPIDLYYLM…ELIKNAYNKL (240 aa)). Residues Ser-136 and Ser-138 each coordinate Mg(2+). 4 residues coordinate Ca(2+): Ser-138, Asp-141, Asp-142, and Asp-173. Ca(2+) contacts are provided by Asn-229, Asp-231, Pro-233, and Glu-234. Residue Glu-234 participates in Mg(2+) binding. N-linked (GlcNAc...) asparagine glycosylation occurs at Asn-254. The Ca(2+) site is built by Asp-264 and Glu-347. The short motif at 397-399 (RGD) is the Cell attachment site element. I-EGF domains are found at residues 449 to 482 (CRDA…KNCE), 483 to 535 (CQTQ…QFCE), 536 to 574 (CDNV…SACQ), and 575 to 613 (CLKS…PLCS). A glycan (N-linked (GlcNAc...) asparagine) is linked at Asn-501. Asn-642 carries an N-linked (GlcNAc...) asparagine glycan. The chain crosses the membrane as a helical span at residues 701-723 (IAAIVGGTVGGVVLVGILLLVIW). The Cytoplasmic portion of the chain corresponds to 724 to 769 (KALTHLSDLREYHRFEKEKLKSQWNNDNPLFKSATTTVMNPKFAES). Ser-745 and Ser-756 each carry phosphoserine. A phosphothreonine mark is found at Thr-758 and Thr-760.

This sequence belongs to the integrin beta chain family. In terms of assembly, heterodimer of an alpha and a beta subunit. The ITGB2 beta subunit associates with the ITGAL, ITGAM, ITGAX or ITGAD alpha subunits. Found in a complex with CD177 and ITGAM/CD11b. Interacts with FGR. Interacts with COPS5 and RANBP9. Interacts with FLNA (via filamin repeats 4, 9, 12, 17, 19, 21, and 23). Interacts with THBD. Both Ser-745 and Ser-756 become phosphorylated when T-cells are exposed to phorbol esters. Phosphorylation on Thr-758 (but not on Ser-756) allows interaction with 14-3-3 proteins.

Its subcellular location is the cell membrane. The protein localises to the membrane raft. In terms of biological role, integrin ITGAL/ITGB2 is a receptor for ICAM1, ICAM2, ICAM3 and ICAM4. Integrin ITGAL/ITGB2 is also a receptor for the secreted form of ubiquitin-like protein ISG15; the interaction is mediated by ITGAL. Integrins ITGAM/ITGB2 and ITGAX/ITGB2 are receptors for the iC3b fragment of the third complement component and for fibrinogen. Integrin ITGAX/ITGB2 recognizes the sequence G-P-R in fibrinogen alpha-chain. Integrin ITGAM/ITGB2 recognizes P1 and P2 peptides of fibrinogen gamma chain. Integrin ITGAM/ITGB2 is also a receptor for factor X. Integrin ITGAD/ITGB2 is a receptor for ICAM3 and VCAM1. Contributes to natural killer cell cytotoxicity. Involved in leukocyte adhesion and transmigration of leukocytes including T-cells and neutrophils. Triggers neutrophil transmigration during lung injury through PTK2B/PYK2-mediated activation. Integrin ITGAL/ITGB2 in association with ICAM3, contributes to apoptotic neutrophil phagocytosis by macrophages. The polypeptide is Integrin beta-2 (ITGB2) (Bos taurus (Bovine)).